Reading from the N-terminus, the 539-residue chain is Glycerophosphoinositol inositolphosphodiesterase GDPD2 (539 aa).

Topologically, residues 1-40 are cytoplasmic; that stretch reads MADSPGCCSIWARCLHCLYSCHWRKYPKQKMQTSKCDCIW. A helical transmembrane segment spans residues 41–61; sequence FGLLFLTFLLSLGWLYIGLIL. The Extracellular segment spans residues 62-83; the sequence is LNDLHNFNEFLFRHWGHWMDWS. The helical transmembrane segment at 84–104 threads the bilayer; the sequence is LIVLLVVSLLVTYASLLLLLG. The Cytoplasmic segment spans residues 105–121; that stretch reads LLLQLCGQPLHLHSLHK. The helical transmembrane segment at 122-142 threads the bilayer; sequence VLLLLIVLLVAAGLVGLDIQW. At 143-154 the chain is on the extracellular side; sequence RQEWHSLRLSLQ. The helical transmembrane segment at 155–175 threads the bilayer; it reads ATAPFLHIGAVAGITLLAWPV. The Cytoplasmic portion of the chain corresponds to 176–189; the sequence is ADTFYRIHPRGPKV. A helical membrane pass occupies residues 190–210; it reads LLLLLFFGVTLVIYLMPLLFI. At 211–491 the chain is on the extracellular side; sequence SSPCIMKLRD…PLWLLPPQKY (281 aa). The region spanning 225–480 is the GP-PDE domain; the sequence is PGLVGHRGAP…NACQLLQQMQ (256 aa). Positions 257, 259, and 272 each coordinate a divalent metal cation. An N-linked (GlcNAc...) asparagine glycan is attached at N333. A helical transmembrane segment spans residues 492–512; it reads LMIWVITDCASILLLLSIFLL. Residues 513 to 539 lie on the Cytoplasmic side of the membrane; the sequence is RGGCAKRNRTGLETAVLLTKINNFASE.

The protein belongs to the glycerophosphoryl diester phosphodiesterase family. Ca(2+) serves as cofactor. Detected in spleen, femur and calvaria.

The protein resides in the cell membrane. The protein localises to the cytoplasm. It localises to the cytoskeleton. The catalysed reaction is sn-glycero-3-phospho-1D-myo-inositol + H2O = 1D-myo-inositol 1-phosphate + glycerol + H(+). Has glycerophosphoinositol inositolphosphodiesterase activity and specifically hydrolyzes glycerophosphoinositol, with no activity for other substrates such as glycerophosphoinositol 4-phosphate, glycerophosphocholine, glycerophosphoethanolamine, and glycerophosphoserine. Accelerates the program of osteoblast differentiation and growth. May play a role in remodeling of the actin cytoskeleton. The chain is Glycerophosphoinositol inositolphosphodiesterase GDPD2 (Gdpd2) from Mus musculus (Mouse).